The primary structure comprises 338 residues: MKVYYDKDCNLAVLKNKTVAIIGYGSQGHAHALNLNDSGIDVIVGLRKESPSVKKATDAGLKVLGVAEAAKAADIVMILLPDETQGDVYRAEIGPNLKEGATIAFGHGFNIHFGQIEPRADINVFMVAPKGPGHMVRHEYTRGGGVPCLVAIHQDPSGKTKEIALAYASAVGGGRSGIIETNFREETETDLFGEQAVLCGGISALIQAGFETLVEAGYAPEMAYFECLHETKLIVDLIYEGGIANMRYSVSNTAEYGDLTRGPRVVNEETKWEMKKILDEIQTGEFCKEWMLENKANKPTFNALRRRGSEHQIEEVGARLRAMMPWIGKNKIVDKAKN.

One can recognise a KARI N-terminal Rossmann domain in the interval 1-181; the sequence is MKVYYDKDCN…GGGRSGIIET (181 aa). Residues 24 to 27, Arg-47, Ser-50, Ser-52, and 82 to 85 contribute to the NADP(+) site; these read YGSQ and DETQ. The active site involves His-107. Gly-133 provides a ligand contact to NADP(+). A KARI C-terminal knotted domain is found at 182–327; that stretch reads NFREETETDL…ARLRAMMPWI (146 aa). Residues Asp-190, Glu-194, Glu-226, and Glu-230 each contribute to the Mg(2+) site. Substrate is bound at residue Ser-251.

It belongs to the ketol-acid reductoisomerase family. Mg(2+) is required as a cofactor.

It catalyses the reaction (2R)-2,3-dihydroxy-3-methylbutanoate + NADP(+) = (2S)-2-acetolactate + NADPH + H(+). The catalysed reaction is (2R,3R)-2,3-dihydroxy-3-methylpentanoate + NADP(+) = (S)-2-ethyl-2-hydroxy-3-oxobutanoate + NADPH + H(+). It participates in amino-acid biosynthesis; L-isoleucine biosynthesis; L-isoleucine from 2-oxobutanoate: step 2/4. Its pathway is amino-acid biosynthesis; L-valine biosynthesis; L-valine from pyruvate: step 2/4. In terms of biological role, involved in the biosynthesis of branched-chain amino acids (BCAA). Catalyzes an alkyl-migration followed by a ketol-acid reduction of (S)-2-acetolactate (S2AL) to yield (R)-2,3-dihydroxy-isovalerate. In the isomerase reaction, S2AL is rearranged via a Mg-dependent methyl migration to produce 3-hydroxy-3-methyl-2-ketobutyrate (HMKB). In the reductase reaction, this 2-ketoacid undergoes a metal-dependent reduction by NADPH to yield (R)-2,3-dihydroxy-isovalerate. The polypeptide is Ketol-acid reductoisomerase (NADP(+)) (Pelobacter propionicus (strain DSM 2379 / NBRC 103807 / OttBd1)).